Here is a 55-residue protein sequence, read N- to C-terminus: ATP synthase small subunit 6-A, mitochondrial (55 aa).

The transit peptide at 1–11 (MRLFDPWPVFF) directs the protein to the mitochondrion. The helical transmembrane segment at 21 to 39 (FLTGFAVTGVLITKLTAGL) threads the bilayer.

Belongs to the ATPase 6 subunit family.

The protein localises to the mitochondrion inner membrane. Mitochondrial membrane ATP synthase (F(1)F(0) ATP synthase or Complex V) produces ATP from ADP in the presence of a proton gradient across the membrane which is generated by electron transport complexes of the respiratory chain. F-type ATPases consist of two structural domains, F(1) - containing the extramembraneous catalytic core and F(0) - containing the membrane proton channel, linked together by a central stalk and a peripheral stalk. During catalysis, ATP synthesis in the catalytic domain of F(1) is coupled via a rotary mechanism of the central stalk subunits to proton translocation. Part of the complex F(0) domain. Confers tolerance to several abiotic stresses (e.g. salt, mannitol, drought, oxidative and cold stresses), probably by providing additional energy needed for cell homeostasis. The chain is ATP synthase small subunit 6-A, mitochondrial from Arabidopsis thaliana (Mouse-ear cress).